A 77-amino-acid chain; its full sequence is Large ribosomal subunit protein uL24 (77 aa).

Belongs to the universal ribosomal protein uL24 family. As to quaternary structure, part of the 50S ribosomal subunit.

Its function is as follows. One of two assembly initiator proteins, it binds directly to the 5'-end of the 23S rRNA, where it nucleates assembly of the 50S subunit. In terms of biological role, one of the proteins that surrounds the polypeptide exit tunnel on the outside of the subunit. The chain is Large ribosomal subunit protein uL24 from Sulfurovum sp. (strain NBC37-1).